A 350-amino-acid polypeptide reads, in one-letter code: MKKIKVLCVDDSALVRGLMTEIINSHPDMEVVATAPDPLVARELIKKHNPDVLTLDVEMPRMDGLDFLEKLMRLRPMPVVMVSSLTERGGEITLRALELGAIDFVTKPKLGIRDGLIEYSEVIADKIRAASRARLRAPAPAGHAAPLRLRSPFASSEKLVIVGASTGGTEAIREVLQPLPADSPAILITQHMPAGFTRSFAQRLDALCAVTVREASDGERVLPGHVYLAPGGETHMRLGRSGANYVIGLQASEPVNRHRPSVDVLFHSAAEAAGGNAIGVILTGMGKDGAAGLLAMKRAGARTMAQDEASCVVFGMPREAIALGAADEVMPLADISERILTRLGDRGHRV.

Positions 5–122 constitute a Response regulatory domain; that stretch reads KVLCVDDSAL…RDGLIEYSEV (118 aa). Residue Asp56 is modified to 4-aspartylphosphate. The region spanning 152–346 is the CheB-type methylesterase domain; that stretch reads PFASSEKLVI…ERILTRLGDR (195 aa). Residues Ser165, His191, and Asp288 contribute to the active site.

Belongs to the CheB family. In terms of processing, phosphorylated by CheA. Phosphorylation of the N-terminal regulatory domain activates the methylesterase activity.

It localises to the cytoplasm. The enzyme catalyses [protein]-L-glutamate 5-O-methyl ester + H2O = L-glutamyl-[protein] + methanol + H(+). It carries out the reaction L-glutaminyl-[protein] + H2O = L-glutamyl-[protein] + NH4(+). Involved in chemotaxis. Part of a chemotaxis signal transduction system that modulates chemotaxis in response to various stimuli. Catalyzes the demethylation of specific methylglutamate residues introduced into the chemoreceptors (methyl-accepting chemotaxis proteins or MCP) by CheR. Also mediates the irreversible deamidation of specific glutamine residues to glutamic acid. This is Protein-glutamate methylesterase/protein-glutamine glutaminase from Bordetella parapertussis (strain 12822 / ATCC BAA-587 / NCTC 13253).